The primary structure comprises 349 residues: Delta(7)-sterol 5(6)-desaturase ERG3A (349 aa).

3 helical membrane passes run 84–104, 124–144, and 162–182; these read ITWI…YIFI, IIAA…FFLL, and LWYD…CIYW. The Fatty acid hydroxylase domain occupies 170–296; it reads PLFLLFTDFC…FTAFDRMGGT (127 aa). The short motif at 184 to 188 is the Histidine box-1 element; the sequence is HRWLH. The short motif at 197-201 is the Histidine box-2 element; that stretch reads HKLHH. A helical membrane pass occupies residues 227–247; sequence HIFPFIFPLQKMAYVALFVFV. The short motif at 272-276 is the Histidine box-3 element; it reads HSLHH.

Belongs to the sterol desaturase family.

The protein resides in the endoplasmic reticulum membrane. It carries out the reaction episterol + 2 Fe(II)-[cytochrome b5] + O2 + 2 H(+) = 5-dehydroepisterol + 2 Fe(III)-[cytochrome b5] + 2 H2O. It functions in the pathway steroid metabolism; ergosterol biosynthesis. In terms of biological role, C-5 sterol desaturase; part of the third module of ergosterol biosynthesis pathway that includes the late steps of the pathway. ERG3A and ERG3BB catalyze the introduction of a C-5 double bond in the B ring to produce 5-dehydroepisterol. The third module or late pathway involves the ergosterol synthesis itself through consecutive reactions that mainly occur in the endoplasmic reticulum (ER) membrane. Firstly, the squalene synthase ERG9 catalyzes the condensation of 2 farnesyl pyrophosphate moieties to form squalene, which is the precursor of all steroids. Squalene synthase is crucial for balancing the incorporation of farnesyl diphosphate (FPP) into sterol and nonsterol isoprene synthesis. Secondly, squalene is converted into lanosterol by the consecutive action of the squalene epoxidase ERG1 and the lanosterol synthase ERG7. Then, the delta(24)-sterol C-methyltransferase ERG6 methylates lanosterol at C-24 to produce eburicol. Eburicol is the substrate of the sterol 14-alpha demethylase encoded by CYP51A, CYP51B and CYP51C, to yield 4,4,24-trimethyl ergosta-8,14,24(28)-trienol. CYP51B encodes the enzyme primarily responsible for sterol 14-alpha-demethylation, and plays an essential role in ascospore formation. CYP51A encodes an additional sterol 14-alpha-demethylase, induced on ergosterol depletion and responsible for the intrinsic variation in azole sensitivity. The third CYP51 isoform, CYP51C, does not encode a sterol 14-alpha-demethylase, but is required for full virulence on host wheat ears. The C-14 reductase ERG24 then reduces the C14=C15 double bond which leads to 4,4-dimethylfecosterol. A sequence of further demethylations at C-4, involving the C-4 demethylation complex containing the C-4 methylsterol oxidases ERG25, the sterol-4-alpha-carboxylate 3-dehydrogenase ERG26 and the 3-keto-steroid reductase ERG27, leads to the production of fecosterol via 4-methylfecosterol. ERG28 has a role as a scaffold to help anchor ERG25, ERG26 and ERG27 to the endoplasmic reticulum. The C-8 sterol isomerase ERG2 then catalyzes the reaction which results in unsaturation at C-7 in the B ring of sterols and thus converts fecosterol to episterol. The sterol-C5-desaturases ERG3A and ERG3BB then catalyze the introduction of a C-5 double bond in the B ring to produce 5-dehydroepisterol. The C-22 sterol desaturases ERG5A and ERG5B further convert 5-dehydroepisterol into ergosta-5,7,22,24(28)-tetraen-3beta-ol by forming the C-22(23) double bond in the sterol side chain. Finally, ergosta-5,7,22,24(28)-tetraen-3beta-ol is substrate of the C-24(28) sterol reductase ERG4 to produce ergosterol. The sequence is that of Delta(7)-sterol 5(6)-desaturase ERG3A from Gibberella zeae (strain ATCC MYA-4620 / CBS 123657 / FGSC 9075 / NRRL 31084 / PH-1) (Wheat head blight fungus).